A 241-amino-acid polypeptide reads, in one-letter code: tRNA pseudouridine synthase A (241 aa).

The Nucleophile role is filled by D51. Y110 is a substrate binding site.

It belongs to the tRNA pseudouridine synthase TruA family. Homodimer.

The catalysed reaction is uridine(38/39/40) in tRNA = pseudouridine(38/39/40) in tRNA. Formation of pseudouridine at positions 38, 39 and 40 in the anticodon stem and loop of transfer RNAs. The chain is tRNA pseudouridine synthase A from Campylobacter jejuni subsp. doylei (strain ATCC BAA-1458 / RM4099 / 269.97).